The primary structure comprises 256 residues: NAD-dependent protein deacetylase (256 aa).

The region spanning 1-254 (MDISYHEKIS…KDILDVIKSE (254 aa)) is the Deacetylase sirtuin-type domain. Residues Ala-28, Thr-32, Phe-39, Arg-40, Gln-105, Ile-107, Asp-108, and His-123 each contribute to the NAD(+) site. Residue Phe-39 coordinates nicotinamide. Nicotinamide is bound by residues Ile-107 and Asp-108. The Proton acceptor role is filled by His-123. Zn(2+)-binding residues include Cys-131, Cys-134, Cys-156, and Cys-159. Residues Thr-197, Ser-198, and Asn-222 each contribute to the NAD(+) site.

The protein belongs to the sirtuin family. Class U subfamily. It depends on Zn(2+) as a cofactor.

It localises to the cytoplasm. The enzyme catalyses N(6)-acetyl-L-lysyl-[protein] + NAD(+) + H2O = 2''-O-acetyl-ADP-D-ribose + nicotinamide + L-lysyl-[protein]. Functionally, NAD-dependent protein deacetylase which modulates the activities of several enzymes which are inactive in their acetylated form. This chain is NAD-dependent protein deacetylase, found in Thermodesulfovibrio yellowstonii (strain ATCC 51303 / DSM 11347 / YP87).